The primary structure comprises 152 residues: Snaclec anticoagulant protein subunit A (152 aa).

Positions 1–23 are cleaved as a signal peptide; the sequence is MGRFIFVSFGLLVVYLSLSGTAA. The C-type lectin domain occupies 24–152; that stretch reads DCSSSWSSYE…EQRDPFVCEA (129 aa). 3 cysteine pairs are disulfide-bonded: C25–C36, C53–C150, and C125–C142. S64, E66, and E70 together coordinate Ca(2+). E151 is a binding site for Ca(2+).

Belongs to the snaclec family. In terms of assembly, heterodimer of subunits A and B; disulfide-linked. As to expression, expressed by the venom gland.

It is found in the secreted. Its function is as follows. Anticoagulant protein which binds to the gamma-carboxyglutamic acid-domain regions of factors IX and factor X in the presence of calcium with a 1 to 1 stoichiometry. Also inhibits platelet aggregation by binding to platelet glycoprotein Ibalpha (GP1BA) and functioning as a blocker of vWF. Is devoid of hemorrhagic and lethal activities. Possesses antithrombotic and thrombolytic activities. Also hydrolyzes the Aalpha-chain of fibrinogen. Does not affect the Bbeta-chain and the gamma chain. The protein is Snaclec anticoagulant protein subunit A of Deinagkistrodon acutus (Hundred-pace snake).